Here is a 386-residue protein sequence, read N- to C-terminus: Patatin-10 (386 aa).

Positions 1–23 are cleaved as a signal peptide; sequence MATTKSFLILFFMILATTSSTCA. The PNPLA domain occupies 32 to 229; it reads LSIDGGGIKG…TVGDPALLSL (198 aa). The GXGXXG motif lies at 36–41; it reads GGGIKG. A GXSXG motif is present at residues 75-79; the sequence is GTSTG. Serine 77 functions as the Nucleophile in the catalytic mechanism. Asparagine 115 is a glycosylation site (N-linked (GlcNAc...) asparagine). Aspartate 215 (proton acceptor) is an active-site residue. Positions 215-217 match the DGA/G motif; that stretch reads DGG. The stretch at 321–384 forms a coiled coil; that stretch reads ENALTGTTTE…NRKKLRANKA (64 aa).

Belongs to the patatin family. In terms of tissue distribution, tuber.

It is found in the vacuole. Functionally, probable lipolytic acyl hydrolase (LAH), an activity which is thought to be involved in the response of tubers to pathogens. This Solanum tuberosum (Potato) protein is Patatin-10.